A 406-amino-acid polypeptide reads, in one-letter code: GTPase Obg (406 aa).

The 159-residue stretch at 1-159 (MKFVDEVSIF…RDLKLELKVL (159 aa)) folds into the Obg domain. Residues 126–149 (GNTRFKSSTNRAPRQTTPGKPGES) are disordered. The span at 129-143 (RFKSSTNRAPRQTTP) shows a compositional bias: polar residues. One can recognise an OBG-type G domain in the interval 160–333 (ADVGLLGLPN…ICRDIMHYLE (174 aa)). Residues 166–173 (GLPNAGKS), 191–195 (FTTLV), 213–216 (DIPG), 283–286 (NKMD), and 314–316 (SAI) each bind GTP. Positions 173 and 193 each coordinate Mg(2+). Residues 376-406 (SGVRSVDDIDEDDDFFDDEDDDGPEIIYVRD) form a disordered region. Positions 383–399 (DIDEDDDFFDDEDDDGP) are enriched in acidic residues.

Belongs to the TRAFAC class OBG-HflX-like GTPase superfamily. OBG GTPase family. In terms of assembly, monomer. The cofactor is Mg(2+).

Its subcellular location is the cytoplasm. An essential GTPase which binds GTP, GDP and possibly (p)ppGpp with moderate affinity, with high nucleotide exchange rates and a fairly low GTP hydrolysis rate. Plays a role in control of the cell cycle, stress response, ribosome biogenesis and in those bacteria that undergo differentiation, in morphogenesis control. This Ectopseudomonas mendocina (strain ymp) (Pseudomonas mendocina) protein is GTPase Obg.